The following is a 235-amino-acid chain: CMP-N,N'-diacetyllegionaminic acid synthase (235 aa).

Belongs to the CMP-NeuNAc synthase family.

It carries out the reaction N,N-diacetyllegionaminate + CTP = CMP-N,N-diacetyllegionaminate + diphosphate. Functionally, involved in biosynthesis of legionaminic acid (5,7-diamino-3,5,7,9-tetradeoxy-D-glycero-D-galacto-non-2-ulosonic acid)(Leg), a sialic acid-like derivative that is incorporated into flagellin via O-linkage to Ser/Thr. Catalyzes the conversion of N,N'-diacetyllegionaminic acid (Leg5Ac7Ac) and CTP into CMP-N,N'-diacetyllegionaminic acid (CMP-Leg5Ac7Ac). In Campylobacter jejuni subsp. jejuni serotype O:2 (strain ATCC 700819 / NCTC 11168), this protein is CMP-N,N'-diacetyllegionaminic acid synthase (legF).